The chain runs to 509 residues: Ankyrin repeat domain-containing protein 13C (509 aa).

The span at 1 to 19 (MTGEKIRSLHRDQKPSKDE) shows a compositional bias: basic and acidic residues. The tract at residues 1–42 (MTGEKIRSLHRDQKPSKDEDLLEPDEEATAGGTFTRTGKLKN) is disordered. 3 ANK repeats span residues 79–110 (DAYF…QKDN), 111–140 (HGNT…PVKV), and 144–173 (QGWS…QQSR).

The protein localises to the endoplasmic reticulum membrane. In terms of biological role, acts as a molecular chaperone for G protein-coupled receptors, regulating their biogenesis and exit from the ER. The sequence is that of Ankyrin repeat domain-containing protein 13C (ankrd13c) from Xenopus tropicalis (Western clawed frog).